The chain runs to 555 residues: Dihydroxy-acid dehydratase (555 aa).

Aspartate 80 is a Mg(2+) binding site. Cysteine 121 contacts [2Fe-2S] cluster. The Mg(2+) site is built by aspartate 122 and lysine 123. At lysine 123 the chain carries N6-carboxylysine. Cysteine 193 provides a ligand contact to [2Fe-2S] cluster. Residue glutamate 444 coordinates Mg(2+). The active-site Proton acceptor is the serine 470.

Belongs to the IlvD/Edd family. In terms of assembly, homodimer. Requires [2Fe-2S] cluster as cofactor. It depends on Mg(2+) as a cofactor.

The enzyme catalyses (2R)-2,3-dihydroxy-3-methylbutanoate = 3-methyl-2-oxobutanoate + H2O. It catalyses the reaction (2R,3R)-2,3-dihydroxy-3-methylpentanoate = (S)-3-methyl-2-oxopentanoate + H2O. The protein operates within amino-acid biosynthesis; L-isoleucine biosynthesis; L-isoleucine from 2-oxobutanoate: step 3/4. It functions in the pathway amino-acid biosynthesis; L-valine biosynthesis; L-valine from pyruvate: step 3/4. Functionally, functions in the biosynthesis of branched-chain amino acids. Catalyzes the dehydration of (2R,3R)-2,3-dihydroxy-3-methylpentanoate (2,3-dihydroxy-3-methylvalerate) into 2-oxo-3-methylpentanoate (2-oxo-3-methylvalerate) and of (2R)-2,3-dihydroxy-3-methylbutanoate (2,3-dihydroxyisovalerate) into 2-oxo-3-methylbutanoate (2-oxoisovalerate), the penultimate precursor to L-isoleucine and L-valine, respectively. The polypeptide is Dihydroxy-acid dehydratase (Aquifex aeolicus (strain VF5)).